The primary structure comprises 609 residues: UvrABC system protein C (609 aa).

Residues 13–91 (HEPGVYRMYD…IKLYQPRYNV (79 aa)) form the GIY-YIG domain. One can recognise a UVR domain in the interval 201–236 (QQVLDYLIGKMEQASRNLDFEQAARYRDQIQAVRSV).

The protein belongs to the UvrC family. In terms of assembly, interacts with UvrB in an incision complex.

The protein resides in the cytoplasm. Its function is as follows. The UvrABC repair system catalyzes the recognition and processing of DNA lesions. UvrC both incises the 5' and 3' sides of the lesion. The N-terminal half is responsible for the 3' incision and the C-terminal half is responsible for the 5' incision. The chain is UvrABC system protein C from Haemophilus influenzae (strain 86-028NP).